The chain runs to 42 residues: Photosystem II reaction center protein J (42 aa).

The chain crosses the membrane as a helical span at residues 10-30 (IPLWLVGTVAGTAALTLVAVF).

It belongs to the PsbJ family. In terms of assembly, PSII is composed of 1 copy each of membrane proteins PsbA, PsbB, PsbC, PsbD, PsbE, PsbF, PsbH, PsbI, PsbJ, PsbK, PsbL, PsbM, PsbT, PsbX, PsbY, PsbZ, Psb30/Ycf12, at least 3 peripheral proteins of the oxygen-evolving complex and a large number of cofactors. It forms dimeric complexes.

It localises to the plastid. It is found in the chloroplast thylakoid membrane. One of the components of the core complex of photosystem II (PSII). PSII is a light-driven water:plastoquinone oxidoreductase that uses light energy to abstract electrons from H(2)O, generating O(2) and a proton gradient subsequently used for ATP formation. It consists of a core antenna complex that captures photons, and an electron transfer chain that converts photonic excitation into a charge separation. This Chlorella vulgaris (Green alga) protein is Photosystem II reaction center protein J.